The primary structure comprises 821 residues: Ent-isokaur-15-ene synthase (821 aa).

Mg(2+) is bound by residues Asp556, Asp560, Asn701, Thr705, and Glu709. Residues 556–560 (DDFFD) carry the DDXXD motif motif.

The protein belongs to the terpene synthase family. Mg(2+) serves as cofactor.

The enzyme catalyses ent-copalyl diphosphate = ent-isokaurene + diphosphate. It functions in the pathway secondary metabolite biosynthesis; terpenoid biosynthesis. Functionally, involved in the biosynthesis of ent-kaurene diterpenoids natural products. Catalyzes the conversion of ent-copalyl diphosphate to the phytoalexin precursor ent-isokaur-15-ene. This chain is Ent-isokaur-15-ene synthase, found in Oryza sativa subsp. indica (Rice).